The chain runs to 309 residues: Aspartate carbamoyltransferase catalytic subunit (309 aa).

Positions 55 and 56 each coordinate carbamoyl phosphate. Residue Lys85 participates in L-aspartate binding. Residues Arg106, His135, and Gln138 each coordinate carbamoyl phosphate. The L-aspartate site is built by Arg168 and Arg230. Residues Leu268 and Pro269 each coordinate carbamoyl phosphate.

Belongs to the aspartate/ornithine carbamoyltransferase superfamily. ATCase family. Heterododecamer (2C3:3R2) of six catalytic PyrB chains organized as two trimers (C3), and six regulatory PyrI chains organized as three dimers (R2).

The catalysed reaction is carbamoyl phosphate + L-aspartate = N-carbamoyl-L-aspartate + phosphate + H(+). Its pathway is pyrimidine metabolism; UMP biosynthesis via de novo pathway; (S)-dihydroorotate from bicarbonate: step 2/3. Its function is as follows. Catalyzes the condensation of carbamoyl phosphate and aspartate to form carbamoyl aspartate and inorganic phosphate, the committed step in the de novo pyrimidine nucleotide biosynthesis pathway. This chain is Aspartate carbamoyltransferase catalytic subunit, found in Wigglesworthia glossinidia brevipalpis.